Here is a 300-residue protein sequence, read N- to C-terminus: Porphobilinogen deaminase (300 aa).

Residue Cys239 is modified to S-(dipyrrolylmethanemethyl)cysteine.

This sequence belongs to the HMBS family. Monomer. Dipyrromethane is required as a cofactor.

The catalysed reaction is 4 porphobilinogen + H2O = hydroxymethylbilane + 4 NH4(+). The protein operates within porphyrin-containing compound metabolism; protoporphyrin-IX biosynthesis; coproporphyrinogen-III from 5-aminolevulinate: step 2/4. Tetrapolymerization of the monopyrrole PBG into the hydroxymethylbilane pre-uroporphyrinogen in several discrete steps. The polypeptide is Porphobilinogen deaminase (Francisella tularensis subsp. novicida (strain U112)).